The sequence spans 230 residues: MAVPVLGGFPIFMVVRVLGFIIAALVLTWTVHYRGGLALSSDNKDHIFNVHPVMMVIGLILFNGEAMLAYKSVQGTKNLKKLVHLTLQLTAFILSLIGVWAALKFHIDKGIENFYSLHSWLGLACLFLFAFQWAAGFVTYWYPGGSRNSRASLMPWHVFLGISIYALALVTATTGILEKVTFLQVNQVITRYSTEAMLVNTMGVLILILGGFVILGVVTPVSGKDQVLTQ.

Transmembrane regions (helical) follow at residues 5-25 (VLGG…IAAL) and 50-70 (VHPV…MLAY). A Cytochrome b561 domain is found at 14–218 (VVRVLGFIIA…LGGFVILGVV (205 aa)). Position 51 (His-51) interacts with heme b. Positions 77 and 81 each coordinate L-ascorbate. The helical transmembrane segment at 82–102 (LVHLTLQLTAFILSLIGVWAA) threads the bilayer. Position 84 (His-84) interacts with heme b. 3 residues coordinate monodehydro-L-ascorbate radical: Phe-105, His-106, and Tyr-115. Residue His-118 coordinates heme b. Residues 120–140 (WLGLACLFLFAFQWAAGFVTY) form a helical membrane-spanning segment. Residues Tyr-140, Arg-150, and Ala-151 each coordinate L-ascorbate. Heme b is bound at residue His-157. Residues 157–177 (HVFLGISIYALALVTATTGIL) traverse the membrane as a helical segment. Monodehydro-L-ascorbate radical is bound by residues Phe-182 and Asn-186. Residues 198-218 (LVNTMGVLILILGGFVILGVV) traverse the membrane as a helical segment.

In terms of assembly, homodimer. The cofactor is heme b. In terms of tissue distribution, expressed in roots, seedlings, leaves and flowers. Expressed in the L1 layer of the shoot apex, in the epidermis of leaf primordia and young leaves and in vascular bundles. In the differentiation zone of the root, detected in the pericycle and in the epidermis, but not in the cortex. Strongly expressed in the cortical region of the root tip, in the meristematic tissue and in the epidermal cell layer of lateral roots, but not in the root caps. Highly expressed in unfertilized ovules. In mature embryos, expressed in the epidermis, cotyledon tips and root tips.

Its subcellular location is the membrane. It carries out the reaction Fe(3+)(out) + L-ascorbate(in) = monodehydro-L-ascorbate radical(in) + Fe(2+)(out) + H(+). Two-heme-containing cytochrome. Catalyzes ascorbate-dependent transmembrane ferric-chelate reduction. In Arabidopsis thaliana (Mouse-ear cress), this protein is Transmembrane ascorbate ferrireductase 2 (CYB561B).